The chain runs to 421 residues: Divalent metal cation transporter MntH (421 aa).

The next 11 membrane-spanning stretches (helical) occupy residues 27–47, 51–71, 100–120, 128–148, 160–180, 201–221, 248–268, 289–309, 337–357, 358–378, and 396–416; these read LGPAFIVSVAYVDPGNFATNI, SLFDYHLIWVILWSNVIAIFL, WFLWITAELAAMATDLAEFLG, LFHIPMTYAAFLTGVVTFAIV, GIIFGLVAVISLAYAFELFIA, AMLIAVGILGATVMPHVIYLH, ILVAMNTAFIINAAMLIVSAA, PLLGVFSSWAFGIALLASGFS, LVTMVPAITIIALGIDPLKSL, IVSQVVLSFELPMAIIPLLLI, and IMGVLVASFVMILNGLLLYLT.

It belongs to the NRAMP family.

Its subcellular location is the cell membrane. In terms of biological role, h(+)-stimulated, divalent metal cation uptake system. This is Divalent metal cation transporter MntH from Caldanaerobacter subterraneus subsp. tengcongensis (strain DSM 15242 / JCM 11007 / NBRC 100824 / MB4) (Thermoanaerobacter tengcongensis).